The following is a 364-amino-acid chain: MQQLPIEKYSELLTKKQQKLTALLAPFNAPELSVFVSPVQNYRMRAEFRVWHDKGDLYHIMFNQQTKQRYRVDCFPIASLLINRMMENLIPLLKEQEILTKKLFQIDYLSTLSNKIIVSLLYHKTLTEEWQAAAQALKVRLEKLDFDVQIVGRATKQKICLERDYADEVLPVNGRNYVYRQIENSFTQPNAAVNCKMLEWAIGCTKNSSGDLLELYCGNGNFSIALAQNFRKVLATEIAKPSVAAAQFNIAENGIDNLQIIRMSAEEFTQAMNGVREFNRLKGIDLKSYECNTIFVDPPRAGLDPDTVKLVQNYDRILYISCNPNTLCNNLTELTKTHRIEKAALFDQFPYTDHMESGVWLIRK.

Residues Q188, Y216, N221, E237, and D297 each coordinate S-adenosyl-L-methionine. Residue C322 is the Nucleophile of the active site. E356 serves as the catalytic Proton acceptor.

Belongs to the class I-like SAM-binding methyltransferase superfamily. RNA M5U methyltransferase family. TrmA subfamily.

The catalysed reaction is uridine(54) in tRNA + S-adenosyl-L-methionine = 5-methyluridine(54) in tRNA + S-adenosyl-L-homocysteine + H(+). It catalyses the reaction uridine(341) in tmRNA + S-adenosyl-L-methionine = 5-methyluridine(341) in tmRNA + S-adenosyl-L-homocysteine + H(+). Functionally, dual-specificity methyltransferase that catalyzes the formation of 5-methyluridine at position 54 (m5U54) in all tRNAs, and that of position 341 (m5U341) in tmRNA (transfer-mRNA). This chain is tRNA/tmRNA (uracil-C(5))-methyltransferase, found in Mannheimia succiniciproducens (strain KCTC 0769BP / MBEL55E).